Here is a 160-residue protein sequence, read N- to C-terminus: Ribosome maturation factor RimP (160 aa).

It belongs to the RimP family.

The protein localises to the cytoplasm. Functionally, required for maturation of 30S ribosomal subunits. The sequence is that of Ribosome maturation factor RimP from Orientia tsutsugamushi (strain Boryong) (Rickettsia tsutsugamushi).